A 401-amino-acid polypeptide reads, in one-letter code: Enolase (401 aa).

Q154 contacts (2R)-2-phosphoglycerate. The active-site Proton donor is the E197. The Mg(2+) site is built by D233, E274, and D301. Residues K326, R355, S356, and K377 each contribute to the (2R)-2-phosphoglycerate site. The active-site Proton acceptor is the K326.

It belongs to the enolase family. Mg(2+) serves as cofactor.

The protein resides in the cytoplasm. It localises to the secreted. It is found in the cell surface. It carries out the reaction (2R)-2-phosphoglycerate = phosphoenolpyruvate + H2O. The protein operates within carbohydrate degradation; glycolysis; pyruvate from D-glyceraldehyde 3-phosphate: step 4/5. Catalyzes the reversible conversion of 2-phosphoglycerate (2-PG) into phosphoenolpyruvate (PEP). It is essential for the degradation of carbohydrates via glycolysis. The chain is Enolase from Thermoplasma acidophilum (strain ATCC 25905 / DSM 1728 / JCM 9062 / NBRC 15155 / AMRC-C165).